A 153-amino-acid chain; its full sequence is UPF0735 ACT domain-containing protein FN1487 (153 aa).

Residues 76-152 (SLHLSLKDRV…GIADIRITGS (77 aa)) enclose the ACT domain.

Belongs to the UPF0735 family.

This is UPF0735 ACT domain-containing protein FN1487 from Fusobacterium nucleatum subsp. nucleatum (strain ATCC 25586 / DSM 15643 / BCRC 10681 / CIP 101130 / JCM 8532 / KCTC 2640 / LMG 13131 / VPI 4355).